Here is a 225-residue protein sequence, read N- to C-terminus: Platelet-derived growth factor subunit B (225 aa).

Residues 1–12 form the signal peptide; sequence LPLCCYLRLVSA. A propeptide spans 13–73 (removed in mature form); sequence EGDPIPEELY…ESESSSRGRR (61 aa). Residue Asn55 is glycosylated (N-linked (GlcNAc...) asparagine). Cystine bridges form between Cys89–Cys133, Cys122–Cys170, and Cys126–Cys172. The propeptide at 183–225 is removed in mature form; sequence RSPGTSREHRAKTPQTRVTVRTVRIRRPPKGKHRKFKHTHDKK.

It belongs to the PDGF/VEGF growth factor family. As to quaternary structure, antiparallel homodimer; disulfide-linked. Antiparallel heterodimer with PDGFA; disulfide-linked. The PDGFB homodimer interacts with PDGFRA and PDGFRB homodimers, and with heterodimers formed by PDGFRA and PDGFRB. The heterodimer composed of PDGFA and PDGFB interacts with PDGFRB homodimers, and with heterodimers formed by PDGFRA and PDGFRB. Interacts with XLKD1. Interacts with LRP1. Interacts with SORL1 (via the N-terminal ectodomain). Interacts with CD82; this interaction inhibits PDGFB-mediated signaling pathway. In terms of tissue distribution, expressed in a distinct subpopulation of smooth muscle cells in injured arteries.

It is found in the secreted. Functionally, growth factor that plays an essential role in the regulation of embryonic development, cell proliferation, cell migration, survival and chemotaxis. Potent mitogen for cells of mesenchymal origin. Required for normal proliferation and recruitment of pericytes and vascular smooth muscle cells in the central nervous system, skin, lung, heart and placenta. Required for normal blood vessel development, and for normal development of kidney glomeruli. Plays an important role in wound healing. Signaling is modulated by the formation of heterodimers with PDGFA. The protein is Platelet-derived growth factor subunit B (Pdgfb) of Rattus norvegicus (Rat).